We begin with the raw amino-acid sequence, 261 residues long: Imidazole glycerol phosphate synthase subunit HisF (261 aa).

Catalysis depends on residues D16 and D135.

The protein belongs to the HisA/HisF family. Heterodimer of HisH and HisF.

Its subcellular location is the cytoplasm. The enzyme catalyses 5-[(5-phospho-1-deoxy-D-ribulos-1-ylimino)methylamino]-1-(5-phospho-beta-D-ribosyl)imidazole-4-carboxamide + L-glutamine = D-erythro-1-(imidazol-4-yl)glycerol 3-phosphate + 5-amino-1-(5-phospho-beta-D-ribosyl)imidazole-4-carboxamide + L-glutamate + H(+). It participates in amino-acid biosynthesis; L-histidine biosynthesis; L-histidine from 5-phospho-alpha-D-ribose 1-diphosphate: step 5/9. Its function is as follows. IGPS catalyzes the conversion of PRFAR and glutamine to IGP, AICAR and glutamate. The HisF subunit catalyzes the cyclization activity that produces IGP and AICAR from PRFAR using the ammonia provided by the HisH subunit. The chain is Imidazole glycerol phosphate synthase subunit HisF from Mycolicibacterium vanbaalenii (strain DSM 7251 / JCM 13017 / BCRC 16820 / KCTC 9966 / NRRL B-24157 / PYR-1) (Mycobacterium vanbaalenii).